The chain runs to 218 residues: Small ribosomal subunit protein uS3 (218 aa).

The KH type-2 domain occupies 38 to 106 (IRDYVAKRLS…RVHINIVEIK (69 aa)).

It belongs to the universal ribosomal protein uS3 family. Part of the 30S ribosomal subunit. Forms a tight complex with proteins S10 and S14.

In terms of biological role, binds the lower part of the 30S subunit head. Binds mRNA in the 70S ribosome, positioning it for translation. This Listeria monocytogenes serotype 4b (strain F2365) protein is Small ribosomal subunit protein uS3.